A 523-amino-acid polypeptide reads, in one-letter code: Histidine ammonia-lyase (523 aa).

Positions 148 to 150 (ASG) form a cross-link, 5-imidazolinone (Ala-Gly). Position 149 is a 2,3-didehydroalanine (Ser) (Ser149).

The protein belongs to the PAL/histidase family. Contains an active site 4-methylidene-imidazol-5-one (MIO), which is formed autocatalytically by cyclization and dehydration of residues Ala-Ser-Gly.

It localises to the cytoplasm. The enzyme catalyses L-histidine = trans-urocanate + NH4(+). Its pathway is amino-acid degradation; L-histidine degradation into L-glutamate; N-formimidoyl-L-glutamate from L-histidine: step 1/3. This Chloroflexus aurantiacus (strain ATCC 29366 / DSM 635 / J-10-fl) protein is Histidine ammonia-lyase.